Here is a 676-residue protein sequence, read N- to C-terminus: Kojibiose hydrolase (676 aa).

Residues 1 to 20 form the signal peptide; that stretch reads MNKGIIQLLALSLFCISVKA. Glutamate 469 serves as the catalytic Proton donor. Glutamate 613 serves as the catalytic Proton acceptor.

Belongs to the glycosyl hydrolase 65 family.

It catalyses the reaction kojibiose + H2O = beta-D-glucose + D-glucose. Glycosidase that specifically hydrolyzes kojibiose to beta-glucose and glucose. Besides its activity on kojibiose, is also able to act on alpha-1,2-oligoglucans with a higher degree of polymerization. Shows weak activity on nigerose, but is not capable of breaking down trehalose, maltose, isomaltose, sucrose, isomaltulose, turanose or melezitose. This chain is Kojibiose hydrolase, found in Mucilaginibacter mallensis.